Consider the following 137-residue polypeptide: MAKETTPDHPATELNEIQRYVTQERGTEAPYSGKLLHNKREGVYHCLCCNQPLFYSDSKYDSGCGWPSFYQPVSDDAIRYLDDNTHNMHRVEIRCGHCDAHLGHVFPDGPQPTGERFCVNSASLSFTDGENGDKTAG.

Residues 7 to 129 (PDHPATELNE…NSASLSFTDG (123 aa)) form the MsrB domain. The Zn(2+) site is built by cysteine 46, cysteine 49, cysteine 95, and cysteine 98. Cysteine 118 functions as the Nucleophile in the catalytic mechanism.

It belongs to the MsrB Met sulfoxide reductase family. Requires Zn(2+) as cofactor.

It carries out the reaction L-methionyl-[protein] + [thioredoxin]-disulfide + H2O = L-methionyl-(R)-S-oxide-[protein] + [thioredoxin]-dithiol. This Serratia proteamaculans (strain 568) protein is Peptide methionine sulfoxide reductase MsrB.